Consider the following 457-residue polypeptide: GTPase Der (457 aa).

2 consecutive EngA-type G domains span residues 4 to 169 (PTIA…PENN) and 177 to 352 (IMMS…NQHR). Residues 10–17 (GRPNVGKS), 57–61 (DTGGL), 120–123 (NKCE), 183–190 (GRPNVGKS), 230–234 (DTAGI), and 295–298 (NKWD) contribute to the GTP site. The KH-like domain occupies 353–438 (RRVTTSVVNE…PLILLWRGKQ (86 aa)).

Belongs to the TRAFAC class TrmE-Era-EngA-EngB-Septin-like GTPase superfamily. EngA (Der) GTPase family. In terms of assembly, associates with the 50S ribosomal subunit.

In terms of biological role, GTPase that plays an essential role in the late steps of ribosome biogenesis. The sequence is that of GTPase Der from Prochlorococcus marinus (strain MIT 9215).